Reading from the N-terminus, the 620-residue chain is Chaperone protein HscA homolog (620 aa).

The protein belongs to the heat shock protein 70 family.

In terms of biological role, chaperone involved in the maturation of iron-sulfur cluster-containing proteins. Has a low intrinsic ATPase activity which is markedly stimulated by HscB. This Shewanella sp. (strain MR-7) protein is Chaperone protein HscA homolog.